The sequence spans 512 residues: Cytochrome P450 1A1 (512 aa).

The tract at residues 29 to 40 (SRPQVPKGLKNP) is mitochondrial targeting signal. S67 carries an O-linked (GlcNAc) serine glycan. A substrate-binding site is contributed by F224. Residue C457 coordinates heme.

The protein belongs to the cytochrome P450 family. In terms of assembly, interacts with cytosolic chaperones HSP70 and HSP90; this interaction is required for initial targeting to mitochondria. Interacts (via mitochondrial targeting signal) with TOMM40 (via N-terminus); this interaction is required for translocation across the mitochondrial outer membrane. Heme is required as a cofactor. Lung, lymphocytes and placenta.

The protein localises to the endoplasmic reticulum membrane. It is found in the mitochondrion inner membrane. It localises to the microsome membrane. The protein resides in the cytoplasm. The enzyme catalyses an organic molecule + reduced [NADPH--hemoprotein reductase] + O2 = an alcohol + oxidized [NADPH--hemoprotein reductase] + H2O + H(+). The catalysed reaction is estrone + reduced [NADPH--hemoprotein reductase] + O2 = 2-hydroxyestrone + oxidized [NADPH--hemoprotein reductase] + H2O + H(+). It catalyses the reaction estrone + reduced [NADPH--hemoprotein reductase] + O2 = 4-hydroxyestrone + oxidized [NADPH--hemoprotein reductase] + H2O + H(+). It carries out the reaction estrone + reduced [NADPH--hemoprotein reductase] + O2 = 6alpha-hydroxyestrone + oxidized [NADPH--hemoprotein reductase] + H2O + H(+). The enzyme catalyses estrone + reduced [NADPH--hemoprotein reductase] + O2 = 15alpha-hydroxyestrone + oxidized [NADPH--hemoprotein reductase] + H2O + H(+). The catalysed reaction is estrone + reduced [NADPH--hemoprotein reductase] + O2 = 16alpha-hydroxyestrone + oxidized [NADPH--hemoprotein reductase] + H2O + H(+). It catalyses the reaction 17beta-estradiol + reduced [NADPH--hemoprotein reductase] + O2 = 2-hydroxy-17beta-estradiol + oxidized [NADPH--hemoprotein reductase] + H2O + H(+). It carries out the reaction 17beta-estradiol + reduced [NADPH--hemoprotein reductase] + O2 = 4-hydroxy-17beta-estradiol + oxidized [NADPH--hemoprotein reductase] + H2O + H(+). The enzyme catalyses 17beta-estradiol + reduced [NADPH--hemoprotein reductase] + O2 = 6alpha-hydroxy-17beta-estradiol + oxidized [NADPH--hemoprotein reductase] + H2O + H(+). The catalysed reaction is 17beta-estradiol + reduced [NADPH--hemoprotein reductase] + O2 = 7alpha-hydroxy-17beta-estradiol + oxidized [NADPH--hemoprotein reductase] + H2O + H(+). It catalyses the reaction 17beta-estradiol + reduced [NADPH--hemoprotein reductase] + O2 = 15alpha-hydroxy-17beta-estradiol + oxidized [NADPH--hemoprotein reductase] + H2O + H(+). It carries out the reaction (5Z,8Z,11Z)-eicosatrienoate + reduced [NADPH--hemoprotein reductase] + O2 = 19-hydroxy-(5Z,8Z,11Z)-eicosatrienoate + oxidized [NADPH--hemoprotein reductase] + H2O + H(+). The enzyme catalyses (5Z,8Z,11Z,14Z)-eicosatetraenoate + reduced [NADPH--hemoprotein reductase] + O2 = 16-hydroxy-(5Z,8Z,11Z,14Z)-eicosatetraenoate + oxidized [NADPH--hemoprotein reductase] + H2O + H(+). The catalysed reaction is (5Z,8Z,11Z,14Z)-eicosatetraenoate + reduced [NADPH--hemoprotein reductase] + O2 = 17-hydroxy-(5Z,8Z,11Z,14Z)-eicosatetraenoate + oxidized [NADPH--hemoprotein reductase] + H2O + H(+). It catalyses the reaction (5Z,8Z,11Z,14Z)-eicosatetraenoate + reduced [NADPH--hemoprotein reductase] + O2 = 18-hydroxy-(5Z,8Z,11Z,14Z)-eicosatetraenoate + oxidized [NADPH--hemoprotein reductase] + H2O + H(+). It carries out the reaction (5Z,8Z,11Z,14Z)-eicosatetraenoate + reduced [NADPH--hemoprotein reductase] + O2 = 19-hydroxy-(5Z,8Z,11Z,14Z)-eicosatetraenoate + oxidized [NADPH--hemoprotein reductase] + H2O + H(+). The enzyme catalyses (5Z,8Z,11Z,14Z,17Z)-eicosapentaenoate + reduced [NADPH--hemoprotein reductase] + O2 = 19-hydroxy-(5Z,8Z,11Z,14Z,17Z)-eicosapentaenoate + oxidized [NADPH--hemoprotein reductase] + H2O + H(+). The catalysed reaction is (5Z,8Z,11Z,14Z)-eicosatetraenoate + reduced [NADPH--hemoprotein reductase] + O2 = (8R,9S)-epoxy-(5Z,11Z,14Z)-eicosatrienoate + oxidized [NADPH--hemoprotein reductase] + H2O + H(+). It catalyses the reaction (5Z,8Z,11Z,14Z)-eicosatetraenoate + reduced [NADPH--hemoprotein reductase] + O2 = (11R,12S)-epoxy-(5Z,8Z,14Z)-eicosatrienoate + oxidized [NADPH--hemoprotein reductase] + H2O + H(+). It carries out the reaction (5Z,8Z,11Z,14Z)-eicosatetraenoate + reduced [NADPH--hemoprotein reductase] + O2 = (14S,15R)-epoxy-(5Z,8Z,11Z)-eicosatrienoate + oxidized [NADPH--hemoprotein reductase] + H2O + H(+). The enzyme catalyses (5Z,8Z,11Z,14Z)-eicosatetraenoate + reduced [NADPH--hemoprotein reductase] + O2 = (14R,15S)-epoxy-(5Z,8Z,11Z)-eicosatrienoate + oxidized [NADPH--hemoprotein reductase] + H2O + H(+). The catalysed reaction is (5Z,8Z,11Z,14Z,17Z)-eicosapentaenoate + reduced [NADPH--hemoprotein reductase] + O2 = (17R,18S)-epoxy-(5Z,8Z,11Z,14Z)-eicosatetraenoate + oxidized [NADPH--hemoprotein reductase] + H2O + H(+). It catalyses the reaction (4Z,7Z,10Z,13Z,16Z,19Z)-docosahexaenoate + reduced [NADPH--hemoprotein reductase] + O2 = (19S,20R)-epoxy-(4Z,7Z,10Z,13Z,16Z)-docosapentaenoate + oxidized [NADPH--hemoprotein reductase] + H2O + H(+). It carries out the reaction (4Z,7Z,10Z,13Z,16Z,19Z)-docosahexaenoate + reduced [NADPH--hemoprotein reductase] + O2 = (19R,20S)-epoxy-(4Z,7Z,10Z,13Z,16Z)-docosapentaenoate + oxidized [NADPH--hemoprotein reductase] + H2O + H(+). The enzyme catalyses all-trans-retinol + reduced [NADPH--hemoprotein reductase] + O2 = all-trans-retinal + oxidized [NADPH--hemoprotein reductase] + 2 H2O + H(+). The catalysed reaction is all-trans-retinal + reduced [NADPH--hemoprotein reductase] + O2 = all-trans-retinoate + oxidized [NADPH--hemoprotein reductase] + H2O + 2 H(+). It catalyses the reaction (13S)-hydroperoxy-(9Z,11E)-octadecadienoate = 13-oxo-(9Z,11E)-octadecadienoate + H2O. It carries out the reaction (12S)-hydroperoxy-(5Z,8Z,10E,14Z)-eicosatetraenoate = 12-oxo-(5Z,8Z,10E,14Z)-eicosatetraenoate + H2O. The enzyme catalyses (15S)-hydroperoxy-(5Z,8Z,11Z,13E)-eicosatetraenoate = 15-oxo-(5Z,8Z,11Z,13E)-eicosatetraenoate + H2O. The catalysed reaction is (5S)-hydroperoxy-(6E,8Z,11Z,14Z)-eicosatetraenoate = 5-oxo-(6E,8Z,11Z,14Z)-eicosatetraenoate + H2O. Its pathway is steroid hormone biosynthesis. The protein operates within lipid metabolism; fatty acid metabolism. It participates in cofactor metabolism; retinol metabolism. A cytochrome P450 monooxygenase involved in the metabolism of various endogenous substrates, including fatty acids, steroid hormones and vitamins. Mechanistically, uses molecular oxygen inserting one oxygen atom into a substrate, and reducing the second into a water molecule, with two electrons provided by NADPH via cytochrome P450 reductase (NADPH--hemoprotein reductase). Catalyzes the hydroxylation of carbon-hydrogen bonds. Exhibits high catalytic activity for the formation of hydroxyestrogens from estrone (E1) and 17beta-estradiol (E2), namely 2-hydroxy E1 and E2, as well as D-ring hydroxylated E1 and E2 at the C15-alpha and C16-alpha positions. Displays different regioselectivities for polyunsaturated fatty acids (PUFA) hydroxylation. Catalyzes the epoxidation of double bonds of certain PUFA. Converts arachidonic acid toward epoxyeicosatrienoic acid (EET) regioisomers, 8,9-, 11,12-, and 14,15-EET, that function as lipid mediators in the vascular system. Displays an absolute stereoselectivity in the epoxidation of eicosapentaenoic acid (EPA) producing the 17(R),18(S) enantiomer. May play an important role in all-trans retinoic acid biosynthesis in extrahepatic tissues. Catalyzes two successive oxidative transformation of all-trans retinol to all-trans retinal and then to the active form all-trans retinoic acid. May also participate in eicosanoids metabolism by converting hydroperoxide species into oxo metabolites (lipoxygenase-like reaction, NADPH-independent). The chain is Cytochrome P450 1A1 from Homo sapiens (Human).